A 223-amino-acid polypeptide reads, in one-letter code: Ubiquitin carboxyl-terminal hydrolase isozyme L1 (223 aa).

N-acetylmethionine is present on methionine 1. One can recognise a UCH catalytic domain in the interval 2–221; the sequence is QLKPMEINPE…VRFSAVALCK (220 aa). An interaction with ubiquitin region spans residues 5 to 10; sequence PMEINP. Cysteine 90 (nucleophile) is an active-site residue. Serine 125 carries the post-translational modification Phosphoserine. The active-site Proton donor is histidine 161. An interaction with ubiquitin region spans residues 211-216; sequence EVRFSA. Cysteine 220 carries the S-farnesyl cysteine lipid modification. A propeptide spans 221–223 (removed in mature form); it reads KAA.

Belongs to the peptidase C12 family. In terms of assembly, monomer. Homodimer. Interacts with COPS5 and SNCA. O-glycosylated.

It localises to the cytoplasm. The protein resides in the endoplasmic reticulum membrane. The enzyme catalyses Thiol-dependent hydrolysis of ester, thioester, amide, peptide and isopeptide bonds formed by the C-terminal Gly of ubiquitin (a 76-residue protein attached to proteins as an intracellular targeting signal).. Ubiquitin-protein hydrolase involved both in the processing of ubiquitin precursors and of ubiquitinated proteins. This enzyme is a thiol protease that recognizes and hydrolyzes a peptide bond at the C-terminal glycine of ubiquitin. Also binds to free monoubiquitin and may prevent its degradation in lysosomes. The homodimer may have ATP-independent ubiquitin ligase activity. The sequence is that of Ubiquitin carboxyl-terminal hydrolase isozyme L1 (UCHL1) from Sus scrofa (Pig).